We begin with the raw amino-acid sequence, 86 residues long: Large ribosomal subunit protein eL31 (86 aa).

It belongs to the eukaryotic ribosomal protein eL31 family.

This chain is Large ribosomal subunit protein eL31, found in Methanopyrus kandleri (strain AV19 / DSM 6324 / JCM 9639 / NBRC 100938).